We begin with the raw amino-acid sequence, 857 residues long: Bifunctional levopimaradiene synthase, chloroplastic (857 aa).

Residues 1 to 33 (MALPSSSLSSQIHTGATTQCIPHFHGSLNAGTS) constitute a chloroplast transit peptide. Lys-257 provides a ligand contact to substrate. The Mg(2+) site is built by Asp-390 and Asp-392. A DXDD motif motif is present at residues 390 to 393 (DIDD). Lys-477 contacts substrate. Mg(2+) contacts are provided by Asp-609, Asp-613, Asn-753, Thr-757, and Glu-761. The DDXXD motif motif lies at 609-613 (DDLYD).

The protein belongs to the terpene synthase family. Tpsd subfamily. Requires Mg(2+) as cofactor.

The protein localises to the plastid. Its subcellular location is the chloroplast. The enzyme catalyses (2E,6E,10E)-geranylgeranyl diphosphate = (+)-copalyl diphosphate. It carries out the reaction (+)-copalyl diphosphate = abieta-7,13-diene + diphosphate. The catalysed reaction is (+)-copalyl diphosphate = abieta-8(14),12-diene + diphosphate. It catalyses the reaction (+)-copalyl diphosphate = neoabietadiene + diphosphate. The protein operates within terpene metabolism; oleoresin biosynthesis. Its function is as follows. Involved in defensive oleoresin formation in conifers in response to insect attack or other injury. Involved in diterpene (C20) olefins biosynthesis. Bifunctional enzyme that catalyzes two sequential cyclizations of geranylgeranyl diphosphate (GGPP) to levopimaradiene. Levopimaradiene is the major products of the enzyme with abietadiene and neoabietadiene. No activity with farnesyl diphosphate (FPP) as substrate. The chain is Bifunctional levopimaradiene synthase, chloroplastic from Pinus banksiana (Jack pine).